Consider the following 64-residue polypeptide: Beta-insect depressant toxin BmKIT4 (64 aa).

The 61-residue stretch at 1 to 61 (DGYIRGSNGC…TWKSESNTCG (61 aa)) folds into the LCN-type CS-alpha/beta domain. 4 disulfide bridges follow: Cys10-Cys60, Cys14-Cys35, Cys21-Cys42, and Cys25-Cys44. Cysteine amide is present on Cys60.

The protein belongs to the long (4 C-C) scorpion toxin superfamily. Sodium channel inhibitor family. Beta subfamily. Expressed by the venom gland.

It is found in the secreted. Depressant insect beta-toxins cause a transient contraction paralysis followed by a slow flaccid paralysis. They bind voltage-independently at site-4 of sodium channels (Nav) and shift the voltage of activation toward more negative potentials thereby affecting sodium channel activation and promoting spontaneous and repetitive firing. This toxin is active only on insects. This is Beta-insect depressant toxin BmKIT4 from Olivierus martensii (Manchurian scorpion).